The primary structure comprises 359 residues: GTPase Obg (359 aa).

An Obg domain is found at methionine 1–leucine 159. The OBG-type G domain maps to alanine 160–glutamate 328. Residues glycine 166–serine 173, phenylalanine 191–valine 195, aspartate 213–glycine 216, asparagine 280–aspartate 283, and serine 309–isoleucine 311 each bind GTP. Mg(2+) is bound by residues serine 173 and threonine 193.

Belongs to the TRAFAC class OBG-HflX-like GTPase superfamily. OBG GTPase family. As to quaternary structure, monomer. Mg(2+) is required as a cofactor.

The protein resides in the cytoplasm. Functionally, an essential GTPase which binds GTP, GDP and possibly (p)ppGpp with moderate affinity, with high nucleotide exchange rates and a fairly low GTP hydrolysis rate. Plays a role in control of the cell cycle, stress response, ribosome biogenesis and in those bacteria that undergo differentiation, in morphogenesis control. This chain is GTPase Obg, found in Cyanothece sp. (strain PCC 7425 / ATCC 29141).